Here is a 277-residue protein sequence, read N- to C-terminus: MVSSNLQELIPALSRSIRQLPLHIETQKVLEFYCRNSSYKSLLVAQDISEFEKHNDHKYLEALIQKTHFLWDNPLPPFLKRFQLYHKELTNHWPYEYQRSLLSMSNPRKESQGYLWRDGKELALSNLRFEKHRWADENIIERLSPEQGTQLLHSIFHQYFFLKSHARLCYNNRKIPVPIVEIPLRPMGNDVADCRIRNLFKRKTAVVWNLLAWENRPLSTRNEQLLGEIITKSETRSMRRLYQRASRRAYVVTNEGKDPNGLQVPEFRPGEILQMSI.

Belongs to the GEP5 family.

The protein localises to the mitochondrion. Essential for respiratory growth and required for maintenance of mtDNA. Required for cell survival in the absence of prohibitins. The protein is Genetic interactor of prohibitin 5, mitochondrial (GEP5) of Zygosaccharomyces rouxii (strain ATCC 2623 / CBS 732 / NBRC 1130 / NCYC 568 / NRRL Y-229).